The following is a 390-amino-acid chain: Alcohol dehydrogenase-like 7 (390 aa).

Zn(2+) is bound by residues Cys56, Ser58, His78, Cys108, Cys111, Cys114, Cys122, and Cys187. Positions 58 and 78 each coordinate an alcohol. Ser58 provides a ligand contact to NAD(+). Residues Gly212–Gly217, Asp236, Lys241, Leu306–Val308, Phe334, and Arg384 each bind NAD(+).

This sequence belongs to the zinc-containing alcohol dehydrogenase family. Class-III subfamily. As to quaternary structure, homodimer. Requires Zn(2+) as cofactor.

Its subcellular location is the cytoplasm. The enzyme catalyses a primary alcohol + NAD(+) = an aldehyde + NADH + H(+). The catalysed reaction is a secondary alcohol + NAD(+) = a ketone + NADH + H(+). This Arabidopsis thaliana (Mouse-ear cress) protein is Alcohol dehydrogenase-like 7.